A 194-amino-acid chain; its full sequence is MSNIKLIVGLANPGDKYAQTRHNAGAWYVQELARVCGATLVADSKYYGLTARVTLHGKDVRLLIPSTFMNLSGKSVGALANFFRIEPEEILVAHDELDMQPGVAKFKLGGGHGGHNGLKDIIAKLANNKGFYRLRIGIGHPGDKNQVSNYVLGKAPASEQTLIETVIDEAVRSTELLFNEDMAKAMHRLHSFKG.

TRNA is bound at residue Tyr17. Residue His22 is the Proton acceptor of the active site. The tRNA site is built by Phe68, Asn70, and Asn116.

It belongs to the PTH family. Monomer.

The protein resides in the cytoplasm. The catalysed reaction is an N-acyl-L-alpha-aminoacyl-tRNA + H2O = an N-acyl-L-amino acid + a tRNA + H(+). Hydrolyzes ribosome-free peptidyl-tRNAs (with 1 or more amino acids incorporated), which drop off the ribosome during protein synthesis, or as a result of ribosome stalling. Its function is as follows. Catalyzes the release of premature peptidyl moieties from peptidyl-tRNA molecules trapped in stalled 50S ribosomal subunits, and thus maintains levels of free tRNAs and 50S ribosomes. This Shewanella sediminis (strain HAW-EB3) protein is Peptidyl-tRNA hydrolase.